Reading from the N-terminus, the 127-residue chain is Fluoride-specific ion channel FluC (127 aa).

Helical transmembrane passes span 4 to 24 (TLLA…QLGV), 35 to 55 (LGTL…LAFF), 71 to 91 (TGLC…VMFL), and 103 to 123 (VLLN…LVTW). Na(+) is bound by residues G75 and T78.

It belongs to the fluoride channel Fluc/FEX (TC 1.A.43) family.

It is found in the cell inner membrane. The catalysed reaction is fluoride(in) = fluoride(out). Its activity is regulated as follows. Na(+) is not transported, but it plays an essential structural role and its presence is essential for fluoride channel function. Fluoride-specific ion channel. Important for reducing fluoride concentration in the cell, thus reducing its toxicity. The polypeptide is Fluoride-specific ion channel FluC (Pectobacterium atrosepticum (strain SCRI 1043 / ATCC BAA-672) (Erwinia carotovora subsp. atroseptica)).